We begin with the raw amino-acid sequence, 281 residues long: Sulfur carrier protein FdhD (281 aa).

Cys127 (cysteine persulfide intermediate) is an active-site residue. Mo-bis(molybdopterin guanine dinucleotide) is bound at residue 264 to 269; the sequence is FAREGR.

The protein belongs to the FdhD family.

The protein resides in the cytoplasm. Its function is as follows. Required for formate dehydrogenase (FDH) activity. Acts as a sulfur carrier protein that transfers sulfur from IscS to the molybdenum cofactor prior to its insertion into FDH. The protein is Sulfur carrier protein FdhD of Mannheimia succiniciproducens (strain KCTC 0769BP / MBEL55E).